The chain runs to 162 residues: Phosphopantetheine adenylyltransferase (162 aa).

Thr14 serves as a coordination point for substrate. ATP-binding positions include 14–15 (TF) and His22. Residues Lys46, Leu78, and Arg92 each contribute to the substrate site. Residues 93 to 95 (GLR), Glu103, and 128 to 134 (HSFISSS) each bind ATP.

It belongs to the bacterial CoaD family. In terms of assembly, homohexamer. It depends on Mg(2+) as a cofactor.

The protein localises to the cytoplasm. The enzyme catalyses (R)-4'-phosphopantetheine + ATP + H(+) = 3'-dephospho-CoA + diphosphate. It functions in the pathway cofactor biosynthesis; coenzyme A biosynthesis; CoA from (R)-pantothenate: step 4/5. Its function is as follows. Reversibly transfers an adenylyl group from ATP to 4'-phosphopantetheine, yielding dephospho-CoA (dPCoA) and pyrophosphate. The sequence is that of Phosphopantetheine adenylyltransferase from Xylella fastidiosa (strain M23).